Here is a 293-residue protein sequence, read N- to C-terminus: Formamidopyrimidine-DNA glycosylase (293 aa).

Pro-2 functions as the Schiff-base intermediate with DNA in the catalytic mechanism. Glu-3 acts as the Proton donor in catalysis. Lys-58 functions as the Proton donor; for beta-elimination activity in the catalytic mechanism. Residues His-104, Arg-127, and Arg-170 each coordinate DNA. The segment at 257 to 293 adopts an FPG-type zinc-finger fold; sequence SVYGREGKPCRNPACGGTVERVVQSGRSTFFCASCQT. Arg-283 acts as the Proton donor; for delta-elimination activity in catalysis.

It belongs to the FPG family. In terms of assembly, monomer. The cofactor is Zn(2+).

It catalyses the reaction Hydrolysis of DNA containing ring-opened 7-methylguanine residues, releasing 2,6-diamino-4-hydroxy-5-(N-methyl)formamidopyrimidine.. The catalysed reaction is 2'-deoxyribonucleotide-(2'-deoxyribose 5'-phosphate)-2'-deoxyribonucleotide-DNA = a 3'-end 2'-deoxyribonucleotide-(2,3-dehydro-2,3-deoxyribose 5'-phosphate)-DNA + a 5'-end 5'-phospho-2'-deoxyribonucleoside-DNA + H(+). Its function is as follows. Involved in base excision repair of DNA damaged by oxidation or by mutagenic agents. Acts as a DNA glycosylase that recognizes and removes damaged bases. Has a preference for oxidized purines, such as 7,8-dihydro-8-oxoguanine (8-oxoG). Has AP (apurinic/apyrimidinic) lyase activity and introduces nicks in the DNA strand. Cleaves the DNA backbone by beta-delta elimination to generate a single-strand break at the site of the removed base with both 3'- and 5'-phosphates. In Brucella canis (strain ATCC 23365 / NCTC 10854 / RM-666), this protein is Formamidopyrimidine-DNA glycosylase.